Reading from the N-terminus, the 183-residue chain is Hypoxanthine/guanine phosphoribosyltransferase (183 aa).

It belongs to the purine/pyrimidine phosphoribosyltransferase family. Archaeal HPRT subfamily. Homodimer.

It is found in the cytoplasm. It catalyses the reaction IMP + diphosphate = hypoxanthine + 5-phospho-alpha-D-ribose 1-diphosphate. The enzyme catalyses GMP + diphosphate = guanine + 5-phospho-alpha-D-ribose 1-diphosphate. The protein operates within purine metabolism; IMP biosynthesis via salvage pathway; IMP from hypoxanthine: step 1/1. Functionally, catalyzes a salvage reaction resulting in the formation of IMP that is energically less costly than de novo synthesis. This Methanothermococcus okinawensis (strain DSM 14208 / JCM 11175 / IH1) protein is Hypoxanthine/guanine phosphoribosyltransferase.